Here is a 309-residue protein sequence, read N- to C-terminus: Probable cell division protein WhiA (309 aa).

The segment at residues 275-309 (SLKELGELVPGGPISKSGINHRLRKINQYAEKLRA) is a DNA-binding region (H-T-H motif).

Belongs to the WhiA family.

In terms of biological role, involved in cell division and chromosome segregation. The polypeptide is Probable cell division protein WhiA (Pediococcus pentosaceus (strain ATCC 25745 / CCUG 21536 / LMG 10740 / 183-1w)).